The following is a 550-amino-acid chain: Envelope glycoprotein E (550 aa).

An N-terminal signal peptide occupies residues 1 to 20 (MDRGAVVGFLLGVCVVSCLA). Residues 21–419 (GTPKTSWRRV…HAPPTHGALR (399 aa)) lie on the Virion surface side of the membrane. The interaction with gI stretch occupies residues 63–88 (CGPLHPSWVSLMPPKQVPETVVDAAC). N-linked (GlcNAc...) asparagine; by host glycosylation occurs at N124. Residues 162–214 (QPAPVPTPPPTPADYDEDDNDEGEDESLAGTPASGTPRLPPPPAPPRSWPSAP) are disordered. A compositionally biased stretch (pro residues) spans 164–173 (APVPTPPPTP). Over residues 175 to 188 (DYDEDDNDEGEDES) the composition is skewed to acidic residues. Residue Y176 is modified to Sulfotyrosine; by host. Positions 199-209 (RLPPPPAPPRS) are enriched in pro residues. Residues 235 to 380 (SPGETFSTNV…GHITISTAAQ (146 aa)) form a fc-binding region. N-linked (GlcNAc...) asparagine; by host glycosylation is present at N243. Cystine bridges form between C271–C297, C280–C289, and C314–C323. The tract at residues 394–413 (GADLAEPTHPHVGAPPHAPP) is disordered. Residues 403 to 413 (PHVGAPPHAPP) are compositionally biased toward low complexity. Residues 420–440 (LGAVMGAALLLSALGLSVWAC) form a helical membrane-spanning segment. The Intravirion segment spans residues 441–550 (MTCWRRRAWR…SQASDSSVFW (110 aa)). Short sequence motifs (internalization motif) lie at residues 463 to 466 (YIRV) and 472 to 475 (YADW). Residues 470–495 (ELYADWSSDSEGERDQVPWLAPPERP) form an interaction with VP22 and UL11 region. Phosphoserine; by host CK2 occurs at positions 476 and 477. Residues 476 to 484 (SSDSEGERD) are acidic. A disordered region spans residues 476–550 (SSDSEGERDQ…SQASDSSVFW (75 aa)). S503 bears the Phosphoserine mark. Polar residues predominate over residues 541 to 550 (SQASDSSVFW).

The protein belongs to the alphaherpesvirinae glycoprotein E family. As to quaternary structure, interacts with gI; this interaction enhances the Fc receptor function of gE. The heterodimer gE/gI interacts with the Fc part of host IgG. Interacts (via C-terminus) with VP22 tegument protein; this interaction is necessary for the recruitment of VP22 to the Golgi and its packaging into virions. Interacts (via C-terminus) with UL11 tegument protein. Post-translationally, phosphorylated on serines within the acidic cluster. Phosphorylation determines whether endocytosed viral gE traffics to the trans-Golgi network or recycles to the cell membrane. N-glycosylated, and sulfated.

It localises to the virion membrane. It is found in the host cell membrane. The protein localises to the host cell junction. Its subcellular location is the host Golgi apparatus membrane. The protein resides in the host endosome membrane. Functionally, in epithelial cells, the heterodimer gE/gI is required for the cell-to-cell spread of the virus, by sorting nascent virions to cell junctions. Once the virus reaches the cell junctions, virus particles can spread to adjacent cells extremely rapidly through interactions with cellular receptors that accumulate at these junctions. Implicated in basolateral spread in polarized cells. In neuronal cells, gE/gI is essential for the anterograde spread of the infection throughout the host nervous system. Together with US9, the heterodimer gE/gI is involved in the sorting and transport of viral structural components toward axon tips. In terms of biological role, the heterodimer gE/gI serves as a receptor for the Fc part of host IgG. Dissociation of gE/gI from IgG occurs at acidic pH. May thus be involved in anti-HSV antibodies bipolar bridging, followed by intracellular endocytosis and degradation, thereby interfering with host IgG-mediated immune responses. This is Envelope glycoprotein E (gE) from Human herpesvirus 1 (strain 17) (HHV-1).